The sequence spans 536 residues: Allene oxide synthase, chloroplastic (536 aa).

A chloroplast-targeting transit peptide spans 1–58; that stretch reads MASSALNNLVAVNPNTLSPSPKSTPLPNTFSNLRRVSAFRPIKASLFGDSPIKIPGIT. The heme b site is built by lysine 151, histidine 182, and lysine 186. (13S)-hydroperoxy-(9Z,11E)-octadecadienoate-binding residues include serine 262, asparagine 339, and lysine 345. Residue asparagine 339 coordinates (13S)-hydroperoxy-(9Z,11E,15Z)-octadecatrienoate. Positions 487 and 489 each coordinate heme b.

It belongs to the cytochrome P450 family. Heme b is required as a cofactor.

Its subcellular location is the plastid. It localises to the chloroplast. It catalyses the reaction (13S)-hydroperoxy-(9Z,11E,15Z)-octadecatrienoate = (9Z,13S,15Z)-12,13-epoxyoctadeca-9,11,15-trienoate + H2O. The enzyme catalyses (13S)-hydroperoxy-(9Z,11E)-octadecadienoate = (9Z,13S)-12,13-epoxyoctadeca-9,11-dienoate + H2O. The protein operates within lipid metabolism; oxylipin biosynthesis. Its function is as follows. Cytochrome P450 enzyme involved in the biosynthesis of oxylipin jasmonates, important phytohormones acting as growth regulators and signaling molecules for plant defense. Functions as an allene oxide synthase that converts hydroperoxy fatty acids to unstable allene epoxides. Catalyzes the dehydration of 13-HPOTE ((13S)-hydroperoxy-(9Z,11E,15Z)-octadecatrienoate), as well as 13-HPODE ((13S)-hydroperoxy-(9Z,11E)-octadecadienoate). The chain is Allene oxide synthase, chloroplastic (CYP74A) from Linum usitatissimum (Flax).